A 435-amino-acid chain; its full sequence is S-locus-specific glycoprotein BS29-2 (435 aa).

The first 30 residues, 1 to 30 (MKGVGKPYENSHTSFLLVFFVLTLFSPAFS), serve as a signal peptide directing secretion. The 123-residue stretch at 33–155 (TLSSIESLKI…NKNDRSGFLW (123 aa)) folds into the Bulb-type lectin domain. 5 N-linked (GlcNAc...) asparagine glycosylation sites follow: Asn113, Asn120, Asn244, Asn260, and Asn389. The region spanning 350–430 (CSGDGFTRMK…NGQDLYVRLA (81 aa)) is the PAN domain. 2 disulfide bridges follow: Cys380–Cys405 and Cys388–Cys390.

In terms of tissue distribution, stigma.

Involved in sporophytic self-incompatibility system (the inability of flowering plants to achieve self-fertilization). The polypeptide is S-locus-specific glycoprotein BS29-2 (SLSG) (Brassica oleracea var. alboglabra (Chinese kale)).